We begin with the raw amino-acid sequence, 64 residues long: Alternative prion protein (64 aa).

A disordered region spans residues 1–22 (MEHWGEPIPGTGQSWRQPLSTS). Positions 11 to 22 (TGQSWRQPLSTS) are enriched in polar residues. Residues 40-58 (WRWLGSAPWWWLGTATWWW) traverse the membrane as a helical segment.

Its subcellular location is the mitochondrion outer membrane. This Ovis aries (Sheep) protein is Alternative prion protein.